Consider the following 359-residue polypeptide: 3-dehydroquinate synthase (359 aa).

Residues 71–76 (DGEAHK), 105–109 (GVIGD), 129–130 (TT), K142, K151, and 169–172 (TLHT) contribute to the NAD(+) site. Residues E184, H247, and H264 each coordinate Zn(2+).

The protein belongs to the sugar phosphate cyclases superfamily. Dehydroquinate synthase family. NAD(+) is required as a cofactor. The cofactor is Co(2+). Requires Zn(2+) as cofactor.

Its subcellular location is the cytoplasm. The enzyme catalyses 7-phospho-2-dehydro-3-deoxy-D-arabino-heptonate = 3-dehydroquinate + phosphate. Its pathway is metabolic intermediate biosynthesis; chorismate biosynthesis; chorismate from D-erythrose 4-phosphate and phosphoenolpyruvate: step 2/7. Its function is as follows. Catalyzes the conversion of 3-deoxy-D-arabino-heptulosonate 7-phosphate (DAHP) to dehydroquinate (DHQ). The chain is 3-dehydroquinate synthase from Neisseria meningitidis serogroup B (strain ATCC BAA-335 / MC58).